A 117-amino-acid chain; its full sequence is Large ribosomal subunit protein uL18 (117 aa).

It belongs to the universal ribosomal protein uL18 family. As to quaternary structure, part of the 50S ribosomal subunit; part of the 5S rRNA/L5/L18/L25 subcomplex. Contacts the 5S and 23S rRNAs.

In terms of biological role, this is one of the proteins that bind and probably mediate the attachment of the 5S RNA into the large ribosomal subunit, where it forms part of the central protuberance. This Serratia proteamaculans (strain 568) protein is Large ribosomal subunit protein uL18.